The sequence spans 135 residues: UPF0299 membrane protein YPK_2559 (135 aa).

3 helical membrane passes run 30-50, 66-86, and 93-113; these read LLLP…FVLL, LLIR…MQYY, and FGPI…VVAY.

It belongs to the UPF0299 family.

The protein resides in the cell inner membrane. This Yersinia pseudotuberculosis serotype O:3 (strain YPIII) protein is UPF0299 membrane protein YPK_2559.